The following is a 600-amino-acid chain: Elongation factor 4 (600 aa).

One can recognise a tr-type G domain in the interval 5 to 187 (KYIRNFSIVA…EIVEKVPAPE (183 aa)). Residues 17 to 22 (DHGKST) and 134 to 137 (NKVD) contribute to the GTP site.

It belongs to the TRAFAC class translation factor GTPase superfamily. Classic translation factor GTPase family. LepA subfamily.

The protein resides in the cell membrane. The catalysed reaction is GTP + H2O = GDP + phosphate + H(+). Its function is as follows. Required for accurate and efficient protein synthesis under certain stress conditions. May act as a fidelity factor of the translation reaction, by catalyzing a one-codon backward translocation of tRNAs on improperly translocated ribosomes. Back-translocation proceeds from a post-translocation (POST) complex to a pre-translocation (PRE) complex, thus giving elongation factor G a second chance to translocate the tRNAs correctly. Binds to ribosomes in a GTP-dependent manner. This Clostridium perfringens (strain ATCC 13124 / DSM 756 / JCM 1290 / NCIMB 6125 / NCTC 8237 / Type A) protein is Elongation factor 4.